We begin with the raw amino-acid sequence, 83 residues long: Delta-conotoxin-like Ac6.2 (83 aa).

Residues 1–22 form the signal peptide; the sequence is MKLTCVVIVAVLFLTAWTFVTA. The propeptide occupies 23–51; that stretch reads DDSRYGLKNLFPKARHEMKNPEASKLNKR. 3 disulfides stabilise this stretch: C54–C69, C61–C73, and C68–C78. P57 and P65 each carry 4-hydroxyproline.

It belongs to the conotoxin O1 superfamily. As to expression, expressed by the venom duct.

It localises to the secreted. Its function is as follows. Delta-conotoxins bind to site 6 of voltage-gated sodium channels (Nav) and inhibit the inactivation process. The sequence is that of Delta-conotoxin-like Ac6.2 from Conus achatinus (Little frog cone).